A 142-amino-acid chain; its full sequence is Hemoglobin subunit alpha (142 aa).

A Globin domain is found at Val-2 to Arg-142. The residue at position 4 (Ser-4) is a Phosphoserine. An N6-succinyllysine mark is found at Lys-8 and Lys-12. Lys-17 carries the post-translational modification N6-acetyllysine; alternate. N6-succinyllysine; alternate is present on Lys-17. A Phosphotyrosine modification is found at Tyr-25. Ser-36 bears the Phosphoserine mark. Position 41 is an N6-succinyllysine (Lys-41). A Phosphoserine modification is found at Ser-50. O2 is bound at residue His-59. His-88 serves as a coordination point for heme b. Ser-103 is modified (phosphoserine). Thr-109 is subject to Phosphothreonine. Ser-125 is modified (phosphoserine). A phosphothreonine mark is found at Thr-135 and Thr-138. At Ser-139 the chain carries Phosphoserine.

The protein belongs to the globin family. In terms of assembly, heterotetramer of two alpha chains and two beta chains. In terms of tissue distribution, red blood cells.

Functionally, involved in oxygen transport from the lung to the various peripheral tissues. Its function is as follows. Hemopressin acts as an antagonist peptide of the cannabinoid receptor CNR1. Hemopressin-binding efficiently blocks cannabinoid receptor CNR1 and subsequent signaling. The chain is Hemoglobin subunit alpha (HBA) from Bos taurus (Bovine).